Consider the following 199-residue polypeptide: Ribonuclease P protein component 3 (199 aa).

This sequence belongs to the eukaryotic/archaeal RNase P protein component 3 family. Consists of a catalytic RNA component and at least 4-5 protein subunits.

It localises to the cytoplasm. It carries out the reaction Endonucleolytic cleavage of RNA, removing 5'-extranucleotides from tRNA precursor.. Functionally, part of ribonuclease P, a protein complex that generates mature tRNA molecules by cleaving their 5'-ends. This chain is Ribonuclease P protein component 3, found in Archaeoglobus fulgidus (strain ATCC 49558 / DSM 4304 / JCM 9628 / NBRC 100126 / VC-16).